Consider the following 86-residue polypeptide: Exodeoxyribonuclease 7 small subunit (86 aa).

This sequence belongs to the XseB family. In terms of assembly, heterooligomer composed of large and small subunits.

It localises to the cytoplasm. It carries out the reaction Exonucleolytic cleavage in either 5'- to 3'- or 3'- to 5'-direction to yield nucleoside 5'-phosphates.. Bidirectionally degrades single-stranded DNA into large acid-insoluble oligonucleotides, which are then degraded further into small acid-soluble oligonucleotides. This Xanthomonas axonopodis pv. citri (strain 306) protein is Exodeoxyribonuclease 7 small subunit.